Here is a 1923-residue protein sequence, read N- to C-terminus: GREB1-like protein (1923 aa).

The segment covering 87-96 has biased composition (acidic residues); that stretch reads EDDEDDEEMS. 3 disordered regions span residues 87-111, 246-326, and 1101-1222; these read EDDE…KPAP, SCHS…GPPK, and RAAV…RGCR. The segment covering 252–262 has biased composition (low complexity); sequence PSSSVSSTVTP. Composition is skewed to polar residues over residues 263-278, 296-307, and 1119-1161; these read ENGT…TQTD, TPAHTGNYSLSP, and PQSN…SPAT. Over residues 1195–1206 the composition is skewed to low complexity; that stretch reads SSTTSKPSSSSS. Residues 1843–1862 form a helical membrane-spanning segment; sequence GVFFSGLLLYLCDSFVGADL.

It belongs to the GREB1 family. As to expression, widely expressed, with prominent expression in the cochlea. Expressed at high levels in fetal kidney. In adult tissues, highest levels in vagina, cervix and epididymis.

The protein localises to the membrane. In terms of biological role, plays a major role in early metanephros and genital development. In Homo sapiens (Human), this protein is GREB1-like protein (GREB1L).